Consider the following 145-residue polypeptide: NADH-quinone oxidoreductase subunit A (145 aa).

3 helical membrane passes run 14-34 (FAVF…GAWF), 66-86 (FYLV…LYAW), and 96-116 (VGFV…FYLV).

This sequence belongs to the complex I subunit 3 family. NDH-1 is composed of 13 different subunits. Subunits NuoA, H, J, K, L, M, N constitute the membrane sector of the complex.

It localises to the cell inner membrane. It carries out the reaction a quinone + NADH + 5 H(+)(in) = a quinol + NAD(+) + 4 H(+)(out). In terms of biological role, NDH-1 shuttles electrons from NADH, via FMN and iron-sulfur (Fe-S) centers, to quinones in the respiratory chain. The immediate electron acceptor for the enzyme in this species is believed to be ubiquinone. Couples the redox reaction to proton translocation (for every two electrons transferred, four hydrogen ions are translocated across the cytoplasmic membrane), and thus conserves the redox energy in a proton gradient. The protein is NADH-quinone oxidoreductase subunit A of Erwinia tasmaniensis (strain DSM 17950 / CFBP 7177 / CIP 109463 / NCPPB 4357 / Et1/99).